Here is a 346-residue protein sequence, read N- to C-terminus: UPF0324 membrane protein FN0533 (346 aa).

Transmembrane regions (helical) follow at residues 5-22 (LYGIILCFLLALPAWKLG), 27-49 (LVGGPVFGIIIGIVIAILLKNRA), 62-81 (VLQYAVILLGFGLNLQTIIS), 86-108 (SLPIIVSTISTSLIIAYILAKLI), 115-137 (VILIGVGSSICGGSAIAATAPVI), 147-169 (AISVIFLFNVIAALIFPTLGDIL), 216-233 (LTRTLAIIPITLFLAVYN), 248-270 (IFPMFIVYFILASIITTVCNYFI), 283-305 (INNVFSFFKHLSKFFIIMAMVAI), and 315-337 (ILSGAKPLTLGFCCWFAISLVSI).

This sequence belongs to the UPF0324 family.

It localises to the cell membrane. The protein is UPF0324 membrane protein FN0533 of Fusobacterium nucleatum subsp. nucleatum (strain ATCC 25586 / DSM 15643 / BCRC 10681 / CIP 101130 / JCM 8532 / KCTC 2640 / LMG 13131 / VPI 4355).